The following is a 135-amino-acid chain: Thyrostimulin beta-5 subunit (135 aa).

The signal sequence occupies residues 1–19 (MVMPLVLSLALTPPPLCHA). Intrachain disulfides connect C30–C87, C54–C102, C63–C118, C67–C120, and C123–C130.

It belongs to the glycoprotein hormones subunit beta family. As to quaternary structure, heterodimer with GPHA2; non-covalently-linked. As to expression, expressed by the venom duct.

The protein localises to the secreted. The polypeptide is Thyrostimulin beta-5 subunit (Conus victoriae (Queen Victoria cone)).